The following is a 292-amino-acid chain: Glycine--tRNA ligase alpha subunit (292 aa).

Belongs to the class-II aminoacyl-tRNA synthetase family. Tetramer of two alpha and two beta subunits.

It is found in the cytoplasm. The catalysed reaction is tRNA(Gly) + glycine + ATP = glycyl-tRNA(Gly) + AMP + diphosphate. The polypeptide is Glycine--tRNA ligase alpha subunit (Geobacter sulfurreducens (strain ATCC 51573 / DSM 12127 / PCA)).